The following is a 110-amino-acid chain: Large ribosomal subunit protein uL22 (110 aa).

This sequence belongs to the universal ribosomal protein uL22 family. As to quaternary structure, part of the 50S ribosomal subunit.

Its function is as follows. This protein binds specifically to 23S rRNA; its binding is stimulated by other ribosomal proteins, e.g. L4, L17, and L20. It is important during the early stages of 50S assembly. It makes multiple contacts with different domains of the 23S rRNA in the assembled 50S subunit and ribosome. The globular domain of the protein is located near the polypeptide exit tunnel on the outside of the subunit, while an extended beta-hairpin is found that lines the wall of the exit tunnel in the center of the 70S ribosome. This chain is Large ribosomal subunit protein uL22, found in Citrobacter koseri (strain ATCC BAA-895 / CDC 4225-83 / SGSC4696).